The primary structure comprises 127 residues: UPF0102 protein Cpha266_0037 (127 aa).

This sequence belongs to the UPF0102 family.

This chain is UPF0102 protein Cpha266_0037, found in Chlorobium phaeobacteroides (strain DSM 266 / SMG 266 / 2430).